Here is a 403-residue protein sequence, read N- to C-terminus: Exodeoxyribonuclease 7 large subunit (403 aa).

The protein belongs to the XseA family. Heterooligomer composed of large and small subunits.

The protein localises to the cytoplasm. The catalysed reaction is Exonucleolytic cleavage in either 5'- to 3'- or 3'- to 5'-direction to yield nucleoside 5'-phosphates.. Bidirectionally degrades single-stranded DNA into large acid-insoluble oligonucleotides, which are then degraded further into small acid-soluble oligonucleotides. The protein is Exodeoxyribonuclease 7 large subunit of Clostridium botulinum (strain Okra / Type B1).